The sequence spans 398 residues: Interleukin-1 receptor type 2 (398 aa).

A signal peptide spans methionine 1–alanine 13. Residues phenylalanine 14 to glutamate 343 lie on the Extracellular side of the membrane. 3 Ig-like C2-type domains span residues proline 18 to arginine 124, proline 134 to serine 223, and proline 237 to serine 349. Cystine bridges form between cysteine 28-cysteine 116, cysteine 50-cysteine 108, and cysteine 152-cysteine 207. Residues asparagine 66, asparagine 72, and asparagine 112 are each glycosylated (N-linked (GlcNAc...) asparagine). 2 N-linked (GlcNAc...) asparagine glycosylation sites follow: asparagine 219 and asparagine 277. The cysteines at positions 258 and 326 are disulfide-linked. The tract at residues histidine 329 to glutamate 343 is contains proteolytic cleavage site. Residues alanine 344–methionine 369 form a helical membrane-spanning segment. The Cytoplasmic segment spans residues histidine 370–lysine 398.

This sequence belongs to the interleukin-1 receptor family. As to quaternary structure, associates with IL1RAP to form a non-signaling interleukin-1 receptor complex. In terms of processing, a soluble form (sIL1R2) can also be produced by proteolytic cleavage at the cell surface (shedding) involving a metalloproteinase; hovever, several sIL1R2 forms ranging from 45 and 60 kDa are reported.

Its subcellular location is the secreted. The protein localises to the cell membrane. In terms of biological role, non-signaling receptor for IL1A, IL1B and IL1RN. Reduces IL1B activities. Serves as a decoy receptor by competitive binding to IL1B and preventing its binding to IL1R1. Also modulates cellular response through non-signaling association with IL1RAP after binding to IL1B. IL1R2 (membrane and secreted forms) preferentially binds IL1B and poorly IL1A and IL1RN. The secreted IL1R2 recruits secreted IL1RAP with high affinity; this complex formation may be the dominant mechanism for neutralization of IL1B by secreted/soluble receptors. This chain is Interleukin-1 receptor type 2 (IL1R2), found in Homo sapiens (Human).